We begin with the raw amino-acid sequence, 353 residues long: Guanine nucleotide-binding protein subunit alpha (353 aa).

G2 carries the N-myristoyl glycine lipid modification. C3 carries S-palmitoyl cysteine lipidation. The G-alpha domain occupies N33–L353. A G1 motif region spans residues K36–T49. GTP-binding residues include E44, S45, G46, K47, S48, T49, D150, L175, T181, G203, N269, K270, D272, and A325. Residue S48 participates in Mg(2+) binding. Residues D173–T181 form a G2 motif region. T181 serves as a coordination point for Mg(2+). The segment at Y196 to R205 is G3 motif. Residues I265–D272 form a G4 motif region. Residues T323–T328 form a G5 motif region.

It belongs to the G-alpha family. G(q) subfamily. As to quaternary structure, g proteins are composed of 3 units; alpha, beta and gamma. The alpha chain contains the guanine nucleotide binding site. Mg(2+) is required as a cofactor.

Its function is as follows. Guanine nucleotide-binding proteins (G proteins) are involved as modulators or transducers in various transmembrane signaling systems. The chain is Guanine nucleotide-binding protein subunit alpha (CGP1) from Coprinellus congregatus (Inky cap fungus).